The primary structure comprises 285 residues: Nucleotide-binding protein Pfl01_0854 (285 aa).

8–15 lines the ATP pocket; sequence GRSGSGKS. Residue 60-63 participates in GTP binding; sequence DARN.

This sequence belongs to the RapZ-like family.

Its function is as follows. Displays ATPase and GTPase activities. In Pseudomonas fluorescens (strain Pf0-1), this protein is Nucleotide-binding protein Pfl01_0854.